A 134-amino-acid polypeptide reads, in one-letter code: DNA-directed RNA polymerase subunit omega (134 aa).

This sequence belongs to the RNA polymerase subunit omega family. In terms of assembly, the RNAP catalytic core consists of 2 alpha, 1 beta, 1 beta' and 1 omega subunit. When a sigma factor is associated with the core the holoenzyme is formed, which can initiate transcription.

It carries out the reaction RNA(n) + a ribonucleoside 5'-triphosphate = RNA(n+1) + diphosphate. Promotes RNA polymerase assembly. Latches the N- and C-terminal regions of the beta' subunit thereby facilitating its interaction with the beta and alpha subunits. This Rhizobium etli (strain CIAT 652) protein is DNA-directed RNA polymerase subunit omega.